A 216-amino-acid chain; its full sequence is MAAGPRTSMLLAFALLCLPWTQEVGAFPAMPLSSLFANAVLRAQHLHQLAADTYKEFERAYIPEGQRYSIQNAQAAFCFSETIPAPTGKDEAQQRSDVELLRFSLLLIQSWLGPVQFLSRVFTNSLVFGTSDRVYEKLKDLEEGIQALMRELEDGSPRAGQILKQTYDKFDTNMRSDDALLKNYGLLSCFKKDLHKAETYLRVMKCRRFVESSCAF.

The N-terminal stretch at 1–26 (MAAGPRTSMLLAFALLCLPWTQEVGA) is a signal peptide. His-45 contributes to the Zn(2+) binding site. Residues Cys-78 and Cys-189 are joined by a disulfide bond. At Ser-131 the chain carries Phosphoserine. Glu-198 contributes to the Zn(2+) binding site. The cysteines at positions 206 and 214 are disulfide-linked.

Belongs to the somatotropin/prolactin family.

Its subcellular location is the secreted. Its function is as follows. Plays an important role in growth control. Its major role in stimulating body growth is to stimulate the liver and other tissues to secrete IGF1. It stimulates both the differentiation and proliferation of myoblasts. It also stimulates amino acid uptake and protein synthesis in muscle and other tissues. The sequence is that of Somatotropin (GH1) from Balaenoptera physalus (Fin whale).